A 254-amino-acid polypeptide reads, in one-letter code: Hydroxyethylthiazole kinase (254 aa).

Substrate is bound at residue Met-40. 2 residues coordinate ATP: Arg-116 and Ser-162. Gly-189 is a binding site for substrate.

This sequence belongs to the Thz kinase family. The cofactor is Mg(2+).

It catalyses the reaction 5-(2-hydroxyethyl)-4-methylthiazole + ATP = 4-methyl-5-(2-phosphooxyethyl)-thiazole + ADP + H(+). It participates in cofactor biosynthesis; thiamine diphosphate biosynthesis; 4-methyl-5-(2-phosphoethyl)-thiazole from 5-(2-hydroxyethyl)-4-methylthiazole: step 1/1. Functionally, catalyzes the phosphorylation of the hydroxyl group of 4-methyl-5-beta-hydroxyethylthiazole (THZ). The chain is Hydroxyethylthiazole kinase from Limosilactobacillus fermentum (strain NBRC 3956 / LMG 18251) (Lactobacillus fermentum).